A 399-amino-acid chain; its full sequence is Tryptophan synthase beta chain (399 aa).

At Lys-92 the chain carries N6-(pyridoxal phosphate)lysine.

The protein belongs to the TrpB family. As to quaternary structure, tetramer of two alpha and two beta chains. Pyridoxal 5'-phosphate serves as cofactor.

It catalyses the reaction (1S,2R)-1-C-(indol-3-yl)glycerol 3-phosphate + L-serine = D-glyceraldehyde 3-phosphate + L-tryptophan + H2O. It participates in amino-acid biosynthesis; L-tryptophan biosynthesis; L-tryptophan from chorismate: step 5/5. Functionally, the beta subunit is responsible for the synthesis of L-tryptophan from indole and L-serine. This chain is Tryptophan synthase beta chain, found in Oceanobacillus iheyensis (strain DSM 14371 / CIP 107618 / JCM 11309 / KCTC 3954 / HTE831).